The primary structure comprises 147 residues: Hemoglobin subunit beta (147 aa).

Val2 is subject to N-acetylvaline. Residues 3–147 (HLSGSEKTAV…VSHALAHKYH (145 aa)) form the Globin domain. A Phosphothreonine modification is found at Thr13. Ser45 is subject to Phosphoserine. Lys60 carries the N6-acetyllysine modification. Position 64 (His64) interacts with heme b. N6-acetyllysine is present on Lys83. A heme b-binding site is contributed by His93. At Cys94 the chain carries S-nitrosocysteine. Lys145 bears the N6-acetyllysine mark.

It belongs to the globin family. As to quaternary structure, heterotetramer of two alpha chains and two beta chains. Red blood cells.

In terms of biological role, involved in oxygen transport from the lung to the various peripheral tissues. In Tachyglossus aculeatus aculeatus (Southeast Australian short-beaked echidna), this protein is Hemoglobin subunit beta (HBB).